Consider the following 224-residue polypeptide: UPF0173 metal-dependent hydrolase TON_1314 (224 aa).

This sequence belongs to the UPF0173 family.

The polypeptide is UPF0173 metal-dependent hydrolase TON_1314 (Thermococcus onnurineus (strain NA1)).